Consider the following 200-residue polypeptide: RPW8-like protein 4 (200 aa).

The RPW8 domain maps to 1 to 157 (MPIAELAVIK…MKAIQVDQWT (157 aa)). Residues 7 to 29 (AVIKTVGGPLIAAALGVGAQVIY) form a helical membrane-spanning segment. The stretch at 70 to 127 (REVHESLTRLLEDAKSIIEKYWKLRWSRHVCRKYRYIKKLESIELELVRVAREIQVHQ) forms a coiled coil.

This sequence belongs to the plant RPW8 protein family.

It localises to the membrane. Its function is as follows. Probable disease resistance (R) protein. The chain is RPW8-like protein 4 (HR4) from Arabidopsis thaliana (Mouse-ear cress).